The sequence spans 225 residues: NAD(P)H-quinone oxidoreductase subunit K, chloroplastic (225 aa).

4 residues coordinate [4Fe-4S] cluster: Cys43, Cys44, Cys108, and Cys139.

The protein belongs to the complex I 20 kDa subunit family. As to quaternary structure, NDH is composed of at least 16 different subunits, 5 of which are encoded in the nucleus. [4Fe-4S] cluster serves as cofactor.

It is found in the plastid. It localises to the chloroplast thylakoid membrane. The enzyme catalyses a plastoquinone + NADH + (n+1) H(+)(in) = a plastoquinol + NAD(+) + n H(+)(out). It catalyses the reaction a plastoquinone + NADPH + (n+1) H(+)(in) = a plastoquinol + NADP(+) + n H(+)(out). Its function is as follows. NDH shuttles electrons from NAD(P)H:plastoquinone, via FMN and iron-sulfur (Fe-S) centers, to quinones in the photosynthetic chain and possibly in a chloroplast respiratory chain. The immediate electron acceptor for the enzyme in this species is believed to be plastoquinone. Couples the redox reaction to proton translocation, and thus conserves the redox energy in a proton gradient. The sequence is that of NAD(P)H-quinone oxidoreductase subunit K, chloroplastic from Hordeum vulgare (Barley).